The primary structure comprises 307 residues: N-acetylmuramic acid 6-phosphate etherase (307 aa).

The SIS domain maps to 62-225 (IVLAFQKGAR…TTASMIRIGK (164 aa)). The active-site Proton donor is the E90. E121 is a catalytic residue.

It belongs to the GCKR-like family. MurNAc-6-P etherase subfamily. In terms of assembly, homodimer.

The catalysed reaction is N-acetyl-D-muramate 6-phosphate + H2O = N-acetyl-D-glucosamine 6-phosphate + (R)-lactate. The protein operates within amino-sugar metabolism; 1,6-anhydro-N-acetylmuramate degradation. It participates in amino-sugar metabolism; N-acetylmuramate degradation. Its pathway is cell wall biogenesis; peptidoglycan recycling. Its function is as follows. Specifically catalyzes the cleavage of the D-lactyl ether substituent of MurNAc 6-phosphate, producing GlcNAc 6-phosphate and D-lactate. Together with AnmK, is also required for the utilization of anhydro-N-acetylmuramic acid (anhMurNAc) either imported from the medium or derived from its own cell wall murein, and thus plays a role in cell wall recycling. The sequence is that of N-acetylmuramic acid 6-phosphate etherase from Mesorhizobium japonicum (strain LMG 29417 / CECT 9101 / MAFF 303099) (Mesorhizobium loti (strain MAFF 303099)).